Reading from the N-terminus, the 308-residue chain is ADP-L-glycero-D-manno-heptose-6-epimerase (308 aa).

NADP(+)-binding positions include 10-11 (FI), 31-32 (DN), lysine 38, lysine 53, 75-79 (EGACS), and asparagine 92. Tyrosine 139 functions as the Proton acceptor in the catalytic mechanism. Lysine 143 is an NADP(+) binding site. Asparagine 168 contacts substrate. NADP(+) is bound by residues valine 169 and lysine 177. The active-site Proton acceptor is lysine 177. Substrate contacts are provided by residues serine 179, histidine 186, 200 to 203 (FAGS), arginine 208, and tyrosine 271.

This sequence belongs to the NAD(P)-dependent epimerase/dehydratase family. HldD subfamily. Homopentamer. It depends on NADP(+) as a cofactor.

The enzyme catalyses ADP-D-glycero-beta-D-manno-heptose = ADP-L-glycero-beta-D-manno-heptose. Its pathway is nucleotide-sugar biosynthesis; ADP-L-glycero-beta-D-manno-heptose biosynthesis; ADP-L-glycero-beta-D-manno-heptose from D-glycero-beta-D-manno-heptose 7-phosphate: step 4/4. The protein operates within bacterial outer membrane biogenesis; LOS core biosynthesis. Its function is as follows. Catalyzes the interconversion between ADP-D-glycero-beta-D-manno-heptose and ADP-L-glycero-beta-D-manno-heptose via an epimerization at carbon 6 of the heptose. The chain is ADP-L-glycero-D-manno-heptose-6-epimerase from Haemophilus influenzae (strain ATCC 51907 / DSM 11121 / KW20 / Rd).